The chain runs to 228 residues: uncharacterized protein (228 aa).

Residues Gly-179, Ile-199, and Leu-208 each contribute to the S-adenosyl-L-methionine site.

This sequence belongs to the class IV-like SAM-binding methyltransferase superfamily. RNA methyltransferase TrmH family.

This is an uncharacterized protein from Borreliella burgdorferi (strain ATCC 35210 / DSM 4680 / CIP 102532 / B31) (Borrelia burgdorferi).